The following is a 240-amino-acid chain: Agamous-like MADS-box protein AGL16 (240 aa).

Residues 1-61 (MGRGKIAIKR…GRLYDFSSSS (61 aa)) form the MADS-box domain. One can recognise a K-box domain in the interval 86–176 (IQFWQKEAAI…HKKVNLMHQQ (91 aa)).

In terms of assembly, homodimer. Interacts with AGL15, AGL24, AP1, AGL6, AG, AGL1, AGL11, AGL5, SEP3, SEP1, AGL63, AGL14, SOC1 and AGL21. Interacts with AGL63. Interacts with SVP. As to expression, expressed at high levels in leaves, moderate levels in roots, seedlings and stems, and at low levels in flowers, pollen and siliques. Accumulates in leaf guard cells and trichomes. Also present in epidermal cells of roots. Expressed in mature guard cells.

It localises to the nucleus. Probable transcription factor involved in the regulation of flowering time in long-day photoperiod. Participates in the repression of FT expression and floral transition, by interacting closely with the FLC-SVP pathways. Functions in the satellite meristemoid lineage of stomatal development. The protein is Agamous-like MADS-box protein AGL16 (AGL16) of Arabidopsis thaliana (Mouse-ear cress).